The chain runs to 567 residues: Interferon lambda receptor 1 (567 aa).

The signal sequence occupies residues 1-22 (MSAWRIRVLATLCFLWQPRVHG). Over 23–229 (QLPPPQNVTL…YEGEWKFPFS (207 aa)) the chain is Extracellular. Positions 26-121 (PPQNVTLLSK…KSQFKEYHLD (96 aa)) constitute a Fibronectin type-III domain. The N-linked (GlcNAc...) asparagine glycan is linked to Asn29. 3 disulfide bridges follow: Cys74-Cys82, Cys86-Cys149, and Cys193-Cys215. Asn141 carries an N-linked (GlcNAc...) asparagine glycan. Residues 230–250 (ATIPVFVLLILLTSASIIWLL) form a helical membrane-spanning segment. The Cytoplasmic portion of the chain corresponds to 251–567 (KQDAKHKKMP…YQHSHYMRRS (317 aa)).

Belongs to the type II cytokine receptor family. As to quaternary structure, heterodimer with IL10RB.

The protein resides in the membrane. Functionally, the IFNLR1/IL10RB dimer is a receptor for the cytokine ligands IFNL2 and IFNL3 and mediates their antiviral activity. The ligand/receptor complex stimulate the activation of the JAK/STAT signaling pathway leading to the expression of IFN-stimulated genes (ISG), which contribute to the antiviral state. Determines the cell type specificity of the lambda interferon action. Shows a more restricted pattern of expression in the epithelial tissues thereby limiting responses to lambda interferons primarily to epithelial cells of the respiratory, gastrointestinal, and reproductive tracts. The protein is Interferon lambda receptor 1 (IFNLR1) of Gallus gallus (Chicken).